The chain runs to 520 residues: Probable DNA ligase (520 aa).

E213 is an ATP binding site. K215 (N6-AMP-lysine intermediate) is an active-site residue. R220, R235, E264, F300, R372, and K378 together coordinate ATP.

It belongs to the ATP-dependent DNA ligase family. Requires Mg(2+) as cofactor.

It catalyses the reaction ATP + (deoxyribonucleotide)n-3'-hydroxyl + 5'-phospho-(deoxyribonucleotide)m = (deoxyribonucleotide)n+m + AMP + diphosphate.. Its function is as follows. DNA ligase that seals nicks in double-stranded DNA during DNA replication, DNA recombination and DNA repair. This is Probable DNA ligase from Mycobacterium sp. (strain JLS).